The following is a 478-amino-acid chain: MIQVLLVTICLAVFPYQGSSKTLKSGNVNDYEVVNPQAVTGLPKGAVKQPEKKYEDTMQYEFEVNGEPVVLHLEKNRGLFSKDYSETHYSPDGREITTNPAVEDHCYYHGRIQNDADSTASISACNGLKGYFTLRGETYLIEPLKLPDSEAHAVYKYENIEKEDEAPKMCGVTQTNWASDEPIKKASQLNLTPEQQRFEPRYIELVIVADHAMVTKYNGDLAAITTWVHQLVNNINGFYRDLNVHITLSAVEVWTNGDLINVQPAASVTLNLFGEWRERDLLNRRMHDHAQLLTGIDLDDNIIGLAYDDSMCDPRYSVGIVQDHSAIIRLVAVTMAHELGHNLGMNHDGDQCNCGANGCVMSVVLIEQRSYQFSDCSKNKYQTYLTNRNPQCILNQPLRTDTVSTPVSGNELLQNSGNPCCDPVTCQPRRGEHCVSGKCCRNCKFLRAGTVCKRAVGDDMDDYCTGISSDCPRNPYKD.

An N-terminal signal peptide occupies residues 1–20 (MIQVLLVTICLAVFPYQGSS). Residues 21 to 194 (KTLKSGNVND…KASQLNLTPE (174 aa)) constitute a propeptide that is removed on maturation. A Pyrrolidone carboxylic acid modification is found at Q195. In terms of domain architecture, Peptidase M12B spans 201–397 (RYIELVIVAD…RNPQCILNQP (197 aa)). 2 residues coordinate Ca(2+): E204 and D288. Intrachain disulfides connect C312/C392, C352/C376, and C354/C359. Zn(2+) is bound at residue H337. The active site involves E338. Zn(2+) contacts are provided by H341 and H347. Positions 392 and 395 each coordinate Ca(2+). Positions 398–413 (LRTDTVSTPVSGNELL) are excised as a propeptide. The region spanning 405–478 (TPVSGNELLQ…SDCPRNPYKD (74 aa)) is the Disintegrin domain. Cystine bridges form between C420–C443, C434–C440, C439–C464, and C452–C471. The Cell attachment site; atypical (VGD) signature appears at 456 to 458 (VGD).

This sequence belongs to the venom metalloproteinase (M12B) family. P-II subfamily. P-IIe sub-subfamily. In terms of assembly, monomer (metalloproteinase). Heterodimer; disulfide-linked (disintegrin). Requires Zn(2+) as cofactor. Expressed by the venom gland.

Its subcellular location is the secreted. Its activity is regulated as follows. Fibrinolytic and caseinolytic activities are inhibited by Cd(2+), Cu(2+) and Co(2+) ions. Not inhibited by Mg(2+), Ca(2+) and Ba(2+). Also inhibited by EDTA, EGTA and 1,10-phenanthroline. Functionally, fibrinolytic and fibrinogenolytic metalloproteinase that hydrolyzes the Aalpha-chain and more slowly the Bbeta-chain of fibrin and fibrinogen. Its fibrinolytic activity is direct, without any plasminogen activation. Also hydrolyzes casein and B-chain of oxidized insulin. Inhibits ADP-induced and collagen-induced platelet aggregation. Shows low hemorrhagic activity. Cleaves the plasma proteinase inhibitors alpha(2)-macroglobulin (A2M) and pregnancy zone protein (PZP), and is inhibited by them. The metalloprotease has no strict P1-P1' specificity requirement. Hydrolysis at sites with a Pro residue at P1 is observed with bradykinin, substance P, PZP and alpha chain fibrinogen (FGA). Poor inhibitor of platelet aggregation. The disintegrin inhibits the adhesion of the alpha-4/beta-1 (ITGA4/ITGB1) integrin to VCAM-1. Inhibition on alpha-2b/beta-3 (ITGA2B/ITGB3) is low. In Macrovipera lebetinus (Levantine viper), this protein is Zinc metalloproteinase/disintegrin.